The following is a 184-amino-acid chain: Protein GrpE (184 aa).

Residues 1–10 are compositionally biased toward basic and acidic residues; that stretch reads MSQETEKDLE. Positions 1 to 38 are disordered; sequence MSQETEKDLEQTQNEELVEEAQSDEKKDQEVDPVEAAQ.

It belongs to the GrpE family. As to quaternary structure, homodimer.

The protein localises to the cytoplasm. In terms of biological role, participates actively in the response to hyperosmotic and heat shock by preventing the aggregation of stress-denatured proteins, in association with DnaK and GrpE. It is the nucleotide exchange factor for DnaK and may function as a thermosensor. Unfolded proteins bind initially to DnaJ; upon interaction with the DnaJ-bound protein, DnaK hydrolyzes its bound ATP, resulting in the formation of a stable complex. GrpE releases ADP from DnaK; ATP binding to DnaK triggers the release of the substrate protein, thus completing the reaction cycle. Several rounds of ATP-dependent interactions between DnaJ, DnaK and GrpE are required for fully efficient folding. The protein is Protein GrpE of Sulfurovum sp. (strain NBC37-1).